The following is a 68-amino-acid chain: Conotoxin Lt5.11 (68 aa).

Positions 1–19 are cleaved as a signal peptide; it reads MLCLPVFIILLLLASPAAP. The propeptide occupies 20–54; the sequence is KSLETRIQNDLIRAGLTDADLKTEKGFLSGLLNVA.

It belongs to the conotoxin T superfamily. Contains 2 disulfide bonds that can be either 'C1-C3, C2-C4' or 'C1-C4, C2-C3', since these disulfide connectivities have been observed for conotoxins with cysteine framework V (for examples, see AC P0DQQ7 and AC P81755). As to expression, expressed by the venom duct.

Its subcellular location is the secreted. The sequence is that of Conotoxin Lt5.11 from Conus litteratus (Lettered cone).